The chain runs to 101 residues: NAD(P)H-quinone oxidoreductase subunit 4L, chloroplastic (101 aa).

3 consecutive transmembrane segments (helical) span residues 2–22, 32–52, and 61–81; these read MLEH…YGLI, MCLE…SDFF, and IFSI…PAIV.

This sequence belongs to the complex I subunit 4L family. As to quaternary structure, NDH is composed of at least 16 different subunits, 5 of which are encoded in the nucleus.

The protein localises to the plastid. It is found in the chloroplast thylakoid membrane. It catalyses the reaction a plastoquinone + NADH + (n+1) H(+)(in) = a plastoquinol + NAD(+) + n H(+)(out). The enzyme catalyses a plastoquinone + NADPH + (n+1) H(+)(in) = a plastoquinol + NADP(+) + n H(+)(out). Functionally, NDH shuttles electrons from NAD(P)H:plastoquinone, via FMN and iron-sulfur (Fe-S) centers, to quinones in the photosynthetic chain and possibly in a chloroplast respiratory chain. The immediate electron acceptor for the enzyme in this species is believed to be plastoquinone. Couples the redox reaction to proton translocation, and thus conserves the redox energy in a proton gradient. This is NAD(P)H-quinone oxidoreductase subunit 4L, chloroplastic from Fagopyrum esculentum subsp. ancestrale (Wild buckwheat).